We begin with the raw amino-acid sequence, 311 residues long: Aspartate carbamoyltransferase catalytic subunit (311 aa).

Positions 59 and 60 each coordinate carbamoyl phosphate. Lysine 87 lines the L-aspartate pocket. Residues arginine 109, histidine 139, and glutamine 142 each contribute to the carbamoyl phosphate site. L-aspartate contacts are provided by arginine 172 and arginine 224. Residues alanine 265 and proline 266 each contribute to the carbamoyl phosphate site.

It belongs to the aspartate/ornithine carbamoyltransferase superfamily. ATCase family. As to quaternary structure, heterododecamer (2C3:3R2) of six catalytic PyrB chains organized as two trimers (C3), and six regulatory PyrI chains organized as three dimers (R2).

It carries out the reaction carbamoyl phosphate + L-aspartate = N-carbamoyl-L-aspartate + phosphate + H(+). Its pathway is pyrimidine metabolism; UMP biosynthesis via de novo pathway; (S)-dihydroorotate from bicarbonate: step 2/3. Catalyzes the condensation of carbamoyl phosphate and aspartate to form carbamoyl aspartate and inorganic phosphate, the committed step in the de novo pyrimidine nucleotide biosynthesis pathway. This is Aspartate carbamoyltransferase catalytic subunit from Streptococcus equi subsp. equi (strain 4047).